The sequence spans 208 residues: Imidazoleglycerol-phosphate dehydratase (208 aa).

This sequence belongs to the imidazoleglycerol-phosphate dehydratase family.

The protein resides in the cytoplasm. The catalysed reaction is D-erythro-1-(imidazol-4-yl)glycerol 3-phosphate = 3-(imidazol-4-yl)-2-oxopropyl phosphate + H2O. It participates in amino-acid biosynthesis; L-histidine biosynthesis; L-histidine from 5-phospho-alpha-D-ribose 1-diphosphate: step 6/9. The sequence is that of Imidazoleglycerol-phosphate dehydratase from Hyphomonas neptunium (strain ATCC 15444).